Here is a 258-residue protein sequence, read N- to C-terminus: Acetylglutamate kinase (258 aa).

Substrate is bound by residues 41 to 42 (GG), R63, and N156.

This sequence belongs to the acetylglutamate kinase family. ArgB subfamily. In terms of assembly, homodimer.

It localises to the cytoplasm. It carries out the reaction N-acetyl-L-glutamate + ATP = N-acetyl-L-glutamyl 5-phosphate + ADP. The protein operates within amino-acid biosynthesis; L-arginine biosynthesis; N(2)-acetyl-L-ornithine from L-glutamate: step 2/4. In terms of biological role, catalyzes the ATP-dependent phosphorylation of N-acetyl-L-glutamate. This Geobacillus stearothermophilus (Bacillus stearothermophilus) protein is Acetylglutamate kinase.